Here is a 210-residue protein sequence, read N- to C-terminus: Ribonuclease HII (210 aa).

The 192-residue stretch at 16 to 207 folds into the RNase H type-2 domain; it reads AIVVGVDEVG…VKKCIISTKN (192 aa). A divalent metal cation-binding residues include Asp22, Glu23, and Asp116.

This sequence belongs to the RNase HII family. Mn(2+) serves as cofactor. Mg(2+) is required as a cofactor.

It localises to the cytoplasm. The catalysed reaction is Endonucleolytic cleavage to 5'-phosphomonoester.. Functionally, endonuclease that specifically degrades the RNA of RNA-DNA hybrids. The protein is Ribonuclease HII of Anaplasma phagocytophilum (strain HZ).